The sequence spans 189 residues: Bilin-binding protein (189 aa).

A signal peptide spans 1–15; sequence MQYLIVLALVAAASA. Disulfide bonds link Cys-23-Cys-130 and Cys-57-Cys-185.

This sequence belongs to the calycin superfamily. Lipocalin family. Homotetramer. In terms of tissue distribution, hemolymph.

It is found in the secreted. Its function is as follows. This protein binds the blue pigments bilins. This is Bilin-binding protein from Pieris brassicae (White butterfly).